The primary structure comprises 254 residues: 5-oxoprolinase subunit A (254 aa).

It belongs to the LamB/PxpA family. Forms a complex composed of PxpA, PxpB and PxpC.

It catalyses the reaction 5-oxo-L-proline + ATP + 2 H2O = L-glutamate + ADP + phosphate + H(+). Catalyzes the cleavage of 5-oxoproline to form L-glutamate coupled to the hydrolysis of ATP to ADP and inorganic phosphate. In Burkholderia mallei (strain NCTC 10247), this protein is 5-oxoprolinase subunit A.